The chain runs to 353 residues: S-adenosylmethionine:tRNA ribosyltransferase-isomerase (353 aa).

Belongs to the QueA family. Monomer.

It is found in the cytoplasm. The catalysed reaction is 7-aminomethyl-7-carbaguanosine(34) in tRNA + S-adenosyl-L-methionine = epoxyqueuosine(34) in tRNA + adenine + L-methionine + 2 H(+). The protein operates within tRNA modification; tRNA-queuosine biosynthesis. Its function is as follows. Transfers and isomerizes the ribose moiety from AdoMet to the 7-aminomethyl group of 7-deazaguanine (preQ1-tRNA) to give epoxyqueuosine (oQ-tRNA). The protein is S-adenosylmethionine:tRNA ribosyltransferase-isomerase of Blochmanniella floridana.